A 174-amino-acid chain; its full sequence is Shikimate kinase 2 (174 aa).

12–17 (GCGKTT) provides a ligand contact to ATP. Thr-16 and Asp-32 together coordinate Mg(2+). Residues Asp-34, Arg-58, and Gly-79 each coordinate substrate. The interval 112–126 (RAYPEDDQRPSLTGK) is LID domain. ATP is bound at residue Arg-120. Arg-139 serves as a coordination point for substrate. Position 155 (Gln-155) interacts with ATP.

It belongs to the shikimate kinase family. AroL subfamily. In terms of assembly, monomer. Requires Mg(2+) as cofactor.

Its subcellular location is the cytoplasm. It carries out the reaction shikimate + ATP = 3-phosphoshikimate + ADP + H(+). The protein operates within metabolic intermediate biosynthesis; chorismate biosynthesis; chorismate from D-erythrose 4-phosphate and phosphoenolpyruvate: step 5/7. Its function is as follows. Catalyzes the specific phosphorylation of the 3-hydroxyl group of shikimic acid using ATP as a cosubstrate. The sequence is that of Shikimate kinase 2 from Sodalis glossinidius (strain morsitans).